A 142-amino-acid chain; its full sequence is Hemoglobin subunit alpha-5 (142 aa).

The region spanning 2–142 is the Globin domain; that stretch reads TFSSAEKAAI…VSAVLVSKYR (141 aa). H59 is an O2 binding site. A heme b-binding site is contributed by H88.

The protein belongs to the globin family. In terms of assembly, heterotetramer of two alpha chains and two beta chains. In terms of tissue distribution, red blood cells.

In terms of biological role, this is a larval (tadpole) alpha-globin. The polypeptide is Hemoglobin subunit alpha-5 (hba5) (Xenopus laevis (African clawed frog)).